The sequence spans 270 residues: Hydroxyethylthiazole kinase (270 aa).

Met46 provides a ligand contact to substrate. Residues Arg120 and Thr166 each contribute to the ATP site. Gly193 contributes to the substrate binding site.

Belongs to the Thz kinase family. Mg(2+) is required as a cofactor.

It carries out the reaction 5-(2-hydroxyethyl)-4-methylthiazole + ATP = 4-methyl-5-(2-phosphooxyethyl)-thiazole + ADP + H(+). It participates in cofactor biosynthesis; thiamine diphosphate biosynthesis; 4-methyl-5-(2-phosphoethyl)-thiazole from 5-(2-hydroxyethyl)-4-methylthiazole: step 1/1. Catalyzes the phosphorylation of the hydroxyl group of 4-methyl-5-beta-hydroxyethylthiazole (THZ). This chain is Hydroxyethylthiazole kinase, found in Herpetosiphon aurantiacus (strain ATCC 23779 / DSM 785 / 114-95).